A 319-amino-acid chain; its full sequence is MNINYSELSSSRSLSVIAPAKINLHLEVLGFRKDGFHELAMLMQSINLFDEIDFLKTDNGEITLTSDDPNLSTGDDNLILKAAQLIQTCSSDKNVGAEIHLKKNIPIGAGLAGGSSDAAATLVGLNSLWGIGSSEKQLEKLGSELGSDVPFCLRGGTQFCFGRGESLEMIPEIKQSMAVVLVKDPLVEVSTPWAYSKFKEIYGNDYLKMEEDFEKRRQSLRDASWLNPLNCTNPPPLQNDLQKVIEPITPAVRNALEFLSSLEGVLSLAMSGSGPSCFGIFADLNGAQIALEENRNKLKLSGLDAWCCAFKSSGVSLRL.

Residue Lys-21 is part of the active site. ATP is bound at residue 106-116 (PIGAGLAGGSS). Residue Asp-148 is part of the active site.

This sequence belongs to the GHMP kinase family. IspE subfamily.

It carries out the reaction 4-CDP-2-C-methyl-D-erythritol + ATP = 4-CDP-2-C-methyl-D-erythritol 2-phosphate + ADP + H(+). The protein operates within isoprenoid biosynthesis; isopentenyl diphosphate biosynthesis via DXP pathway; isopentenyl diphosphate from 1-deoxy-D-xylulose 5-phosphate: step 3/6. In terms of biological role, catalyzes the phosphorylation of the position 2 hydroxy group of 4-diphosphocytidyl-2C-methyl-D-erythritol. In Prochlorococcus marinus (strain SARG / CCMP1375 / SS120), this protein is 4-diphosphocytidyl-2-C-methyl-D-erythritol kinase.